The primary structure comprises 418 residues: D-amino acid dehydrogenase (418 aa).

Position 3-17 (V3–W17) interacts with FAD.

The protein belongs to the DadA oxidoreductase family. FAD serves as cofactor.

The enzyme catalyses a D-alpha-amino acid + A + H2O = a 2-oxocarboxylate + AH2 + NH4(+). The protein operates within amino-acid degradation; D-alanine degradation; NH(3) and pyruvate from D-alanine: step 1/1. Its function is as follows. Oxidative deamination of D-amino acids. This chain is D-amino acid dehydrogenase, found in Neisseria meningitidis serogroup C / serotype 2a (strain ATCC 700532 / DSM 15464 / FAM18).